We begin with the raw amino-acid sequence, 331 residues long: L-lactate dehydrogenase A chain (331 aa).

NAD(+) contacts are provided by residues 29 to 57 and arginine 98; that span reads GMVG…MEDK. Residues arginine 105, asparagine 137, and arginine 168 each contribute to the substrate site. Asparagine 137 serves as a coordination point for NAD(+). The active-site Proton acceptor is histidine 192. Residue threonine 247 participates in substrate binding.

The protein belongs to the LDH/MDH superfamily. LDH family. In terms of assembly, homotetramer.

The protein resides in the cytoplasm. The catalysed reaction is (S)-lactate + NAD(+) = pyruvate + NADH + H(+). It functions in the pathway fermentation; pyruvate fermentation to lactate; (S)-lactate from pyruvate: step 1/1. In terms of biological role, interconverts simultaneously and stereospecifically pyruvate and lactate with concomitant interconversion of NADH and NAD(+). The protein is L-lactate dehydrogenase A chain (ldha) of Parachaenichthys charcoti (Charcot's dragonfish).